Consider the following 237-residue polypeptide: Immunoglobulin superfamily member 6 (237 aa).

An N-terminal signal peptide occupies residues 1–27 (MGPVSARRSRLRPEISLILFQVGMVGA). The Extracellular segment spans residues 28-152 (CTVYVLQPGY…ERLFSKEVRS (125 aa)). In terms of domain architecture, Ig-like C2-type spans 30 to 134 (VYVLQPGYLE…ELSPSAKHVG (105 aa)). An intrachain disulfide couples C51 to C118. The helical transmembrane segment at 153–173 (FLIVLLALLSVYITGVCVTFI) threads the bilayer. Residues 174–237 (VLFKSKSNGP…RKALPNPGRA (64 aa)) lie on the Cytoplasmic side of the membrane. A compositionally biased stretch (basic and acidic residues) spans 215 to 229 (TSHLPEQEGTDENRK). The interval 215 to 237 (TSHLPEQEGTDENRKALPNPGRA) is disordered.

As to expression, ubiquitous with higher expression in immune tissue.

The protein localises to the membrane. The chain is Immunoglobulin superfamily member 6 (Igsf6) from Mus musculus (Mouse).